Reading from the N-terminus, the 22-residue chain is uncharacterized protein (22 aa).

This sequence belongs to the asfivirus C84L family.

This is an uncharacterized protein from Ornithodoros (relapsing fever ticks).